We begin with the raw amino-acid sequence, 167 residues long: MTQEEEYILIGKVLGVWGINGGLKIEVLTDFPERFDAGNELLIGRAPYTISQTSWQKAQVIVHLSEITGIDAAEELSGAQVEIPAAALKKLPKGVYYDFQLIGLEVTDLSGNRIGQIKEILHMPSNDIYVSSYGAKEALIPAVKDVVKEINLQKGQVIIDPIPGLLD.

Positions 93–165 (KGVYYDFQLI…QVIIDPIPGL (73 aa)) constitute a PRC barrel domain.

It belongs to the RimM family. As to quaternary structure, binds ribosomal protein uS19.

Its subcellular location is the cytoplasm. Its function is as follows. An accessory protein needed during the final step in the assembly of 30S ribosomal subunit, possibly for assembly of the head region. Essential for efficient processing of 16S rRNA. May be needed both before and after RbfA during the maturation of 16S rRNA. It has affinity for free ribosomal 30S subunits but not for 70S ribosomes. This Dehalococcoides mccartyi (strain ATCC BAA-2266 / KCTC 15142 / 195) (Dehalococcoides ethenogenes (strain 195)) protein is Ribosome maturation factor RimM.